Here is a 100-residue protein sequence, read N- to C-terminus: Aspartyl/glutamyl-tRNA(Asn/Gln) amidotransferase subunit C (100 aa).

This sequence belongs to the GatC family. As to quaternary structure, heterotrimer of A, B and C subunits.

It carries out the reaction L-glutamyl-tRNA(Gln) + L-glutamine + ATP + H2O = L-glutaminyl-tRNA(Gln) + L-glutamate + ADP + phosphate + H(+). It catalyses the reaction L-aspartyl-tRNA(Asn) + L-glutamine + ATP + H2O = L-asparaginyl-tRNA(Asn) + L-glutamate + ADP + phosphate + 2 H(+). In terms of biological role, allows the formation of correctly charged Asn-tRNA(Asn) or Gln-tRNA(Gln) through the transamidation of misacylated Asp-tRNA(Asn) or Glu-tRNA(Gln) in organisms which lack either or both of asparaginyl-tRNA or glutaminyl-tRNA synthetases. The reaction takes place in the presence of glutamine and ATP through an activated phospho-Asp-tRNA(Asn) or phospho-Glu-tRNA(Gln). The chain is Aspartyl/glutamyl-tRNA(Asn/Gln) amidotransferase subunit C from Streptococcus pyogenes serotype M18 (strain MGAS8232).